Here is a 299-residue protein sequence, read N- to C-terminus: Mitochondrial magnesium exporter 1 (299 aa).

3 Solcar repeats span residues 12-103 (SNPV…GKRL), 112-200 (LTYP…LQEL), and 210-296 (ISTT…TNDL). The next 4 membrane-spanning stretches (helical) occupy residues 79–99 (ISAPLVGVTPIYAVDFAVYAA), 114–134 (YPQIFAAGALAGVCSALVTVP), 216–236 (ILSGGTAGIVFWTLAVPFDVL), and 272–292 (ILPILLRAFPSTAAVFFGVEL).

The protein belongs to the mitochondrial carrier (TC 2.A.29) family.

The protein resides in the mitochondrion membrane. In terms of biological role, mediates efflux of magnesium ions from mitochondria, suggesting a role in magnesium homeostasis. This chain is Mitochondrial magnesium exporter 1, found in Drosophila melanogaster (Fruit fly).